The primary structure comprises 2297 residues: Serine/threonine-protein kinase WNK2 (2297 aa).

Positions 1–10 (MDGDGGRRDV) are enriched in basic and acidic residues. 2 disordered regions span residues 1–75 (MDGD…QRRV) and 89–183 (ARGR…EDDL). 2 positions are modified to omega-N-methylarginine: R19 and R30. Position 45 is a phosphoserine (S45). Residues 92-120 (RPAAPAPAALVAQPGAPGAPADAGPEPVG) are compositionally biased toward low complexity. The span at 142 to 172 (GPREEAAATVRKEDEGAAEAKPEPGRTRRDE) shows a compositional bias: basic and acidic residues. Residues 173–182 (PEEEEDDEDD) show a composition bias toward acidic residues. Positions 195–453 (LKFDIELGRG…IKDLLSHAFF (259 aa)) constitute a Protein kinase domain. Residues S205, 275-278 (TELM), and K325 contribute to the ATP site. D342 (proton acceptor) is an active-site residue. A phosphoserine; by autocatalysis mark is found at S352 and S356. At S560 the chain carries Phosphoserine. Disordered stretches follow at residues 579 to 630 (AQAG…DSQS), 699 to 751 (FPDP…PVVP), 917 to 1022 (PQMA…PGSQ), 1117 to 1185 (PVQE…ERAS), 1262 to 1297 (SEDTDADRGSDPGTSPPHLSTCGLGTGEESRQSQAN), 1323 to 1345 (APEAPESSPPLPLSSLPPEASQG), 1374 to 1480 (SAQS…HEAP), and 1492 to 1586 (PCTP…DSTI). Residues 604 to 625 (PTSATSLASDSTFDSGQGSTVY) show a composition bias toward polar residues. Composition is skewed to pro residues over residues 709–740 (VLPPPSTPMPTGPGQPAPPGQQPPPLAQPTPL) and 939–1007 (PPQP…PLQP). A Phosphoserine modification is found at S1150. Residues 1167 to 1178 (ARKHHRRSTRAR) show a composition bias toward basic residues. S1262 is modified (phosphoserine). Polar residues predominate over residues 1392 to 1406 (SKEQPSFLASQQLLS). Residues 1411 to 1426 (SNPPGAPPAPLAPSSP) are compositionally biased toward pro residues. 2 stretches are compositionally biased toward polar residues: residues 1439 to 1453 (ATSTMPEPASGTASQ) and 1461 to 1473 (QGLTSELETSQPL). Over residues 1510–1520 (EPLPPPAPEPS) the composition is skewed to pro residues. Over residues 1526-1544 (PQPALGQPAPLLPAAVGAV) the composition is skewed to low complexity. The segment covering 1552–1565 (PSPPLGPTVPPQPP) has biased composition (pro residues). The residue at position 1588 (S1588) is a Phosphoserine. Over residues 1621–1631 (TLEPLRGDQPR) the composition is skewed to basic and acidic residues. The interval 1621-1865 (TLEPLRGDQP…PVQKQASLPV (245 aa)) is disordered. Over residues 1675-1688 (QGTSSSMTAESSPR) the composition is skewed to polar residues. A Phosphoserine modification is found at S1685. Residues 1721–1731 (ARVEPTDRDGG) are compositionally biased toward basic and acidic residues. 5 positions are modified to phosphoserine: S1736, S1817, S1818, S1862, and S1889. Disordered regions lie at residues 1970–1990 (NVGFFHTAPPTGRRRKTSKSK) and 2011–2031 (TGHLADSSRGPPAKDPAQASV). Over residues 1981–1990 (GRRRKTSKSK) the composition is skewed to basic residues. Position 2067 is a phosphoserine (S2067). 2 disordered regions span residues 2123 to 2142 (SRSSTSSLAPGPEPGPQPAL) and 2269 to 2297 (CCGHSTQPRGGQRVGSKTASFAASDPVRS). Positions 2272 to 2289 (HSTQPRGGQRVGSKTASF) are enriched in polar residues.

It belongs to the protein kinase superfamily. Ser/Thr protein kinase family. WNK subfamily. In terms of assembly, forms a complex with the phosphorylated form of STK39. Requires Mg(2+) as cofactor. In terms of processing, autophosphorylated. Autophosphorylation at Ser-352 and Ser-356 promotes its activity. As to expression, expressed in various cancer cell lines (at protein level). Predominantly expressed in heart, brain, skeletal muscle and colon.

Its subcellular location is the cytoplasm. The protein resides in the cell membrane. It carries out the reaction L-seryl-[protein] + ATP = O-phospho-L-seryl-[protein] + ADP + H(+). The catalysed reaction is L-threonyl-[protein] + ATP = O-phospho-L-threonyl-[protein] + ADP + H(+). With respect to regulation, activation requires autophosphorylation of Ser-356 and, to a lower extent, Ser-352. Its function is as follows. Serine/threonine-protein kinase component of the WNK2-SPAK/OSR1 kinase cascade, which plays an important role in the regulation of electrolyte homeostasis, cell signaling, survival, and proliferation. The WNK2-SPAK/OSR1 kinase cascade is composed of WNK2, which mediates phosphorylation and activation of downstream kinases OXSR1/OSR1 and STK39/SPAK. Following activation, OXSR1/OSR1 and STK39/SPAK catalyze phosphorylation of ion cotransporters, regulating their activity. Acts as an activator and inhibitor of sodium-coupled chloride cotransporters and potassium-coupled chloride cotransporters respectively. Activates SLC12A2, SCNN1A, SCNN1B, SCNN1D and SGK1 and inhibits SLC12A5. Negatively regulates the EGF-induced activation of the ERK/MAPK-pathway and the downstream cell cycle progression. Affects MAPK3/MAPK1 activity by modulating the activity of MAP2K1 and this modulation depends on phosphorylation of MAP2K1 by PAK1. WNK2 acts by interfering with the activity of PAK1 by controlling the balance of the activity of upstream regulators of PAK1 activity, RHOA and RAC1, which display reciprocal activity. This Homo sapiens (Human) protein is Serine/threonine-protein kinase WNK2.